We begin with the raw amino-acid sequence, 318 residues long: 4-hydroxy-3-methylbut-2-enyl diphosphate reductase (318 aa).

Cys-12 contributes to the [4Fe-4S] cluster binding site. His-41 and His-74 together coordinate (2E)-4-hydroxy-3-methylbut-2-enyl diphosphate. 2 residues coordinate dimethylallyl diphosphate: His-41 and His-74. Residues His-41 and His-74 each contribute to the isopentenyl diphosphate site. Cys-96 serves as a coordination point for [4Fe-4S] cluster. A (2E)-4-hydroxy-3-methylbut-2-enyl diphosphate-binding site is contributed by His-124. His-124 lines the dimethylallyl diphosphate pocket. Residue His-124 coordinates isopentenyl diphosphate. Glu-126 (proton donor) is an active-site residue. Thr-167 contacts (2E)-4-hydroxy-3-methylbut-2-enyl diphosphate. A [4Fe-4S] cluster-binding site is contributed by Cys-197. The (2E)-4-hydroxy-3-methylbut-2-enyl diphosphate site is built by Ser-225, Ser-226, Asn-227, and Ser-269. Residues Ser-225, Ser-226, Asn-227, and Ser-269 each contribute to the dimethylallyl diphosphate site. The isopentenyl diphosphate site is built by Ser-225, Ser-226, Asn-227, and Ser-269.

It belongs to the IspH family. The cofactor is [4Fe-4S] cluster.

The enzyme catalyses isopentenyl diphosphate + 2 oxidized [2Fe-2S]-[ferredoxin] + H2O = (2E)-4-hydroxy-3-methylbut-2-enyl diphosphate + 2 reduced [2Fe-2S]-[ferredoxin] + 2 H(+). The catalysed reaction is dimethylallyl diphosphate + 2 oxidized [2Fe-2S]-[ferredoxin] + H2O = (2E)-4-hydroxy-3-methylbut-2-enyl diphosphate + 2 reduced [2Fe-2S]-[ferredoxin] + 2 H(+). Its pathway is isoprenoid biosynthesis; dimethylallyl diphosphate biosynthesis; dimethylallyl diphosphate from (2E)-4-hydroxy-3-methylbutenyl diphosphate: step 1/1. It participates in isoprenoid biosynthesis; isopentenyl diphosphate biosynthesis via DXP pathway; isopentenyl diphosphate from 1-deoxy-D-xylulose 5-phosphate: step 6/6. In terms of biological role, catalyzes the conversion of 1-hydroxy-2-methyl-2-(E)-butenyl 4-diphosphate (HMBPP) into a mixture of isopentenyl diphosphate (IPP) and dimethylallyl diphosphate (DMAPP). Acts in the terminal step of the DOXP/MEP pathway for isoprenoid precursor biosynthesis. In Francisella tularensis subsp. mediasiatica (strain FSC147), this protein is 4-hydroxy-3-methylbut-2-enyl diphosphate reductase.